The sequence spans 875 residues: Alanine--tRNA ligase (875 aa).

Residues His564, His568, Cys666, and His670 each coordinate Zn(2+).

Belongs to the class-II aminoacyl-tRNA synthetase family. As to quaternary structure, homotetramer. The cofactor is Zn(2+).

It is found in the cytoplasm. It catalyses the reaction tRNA(Ala) + L-alanine + ATP = L-alanyl-tRNA(Ala) + AMP + diphosphate. Catalyzes the attachment of alanine to tRNA(Ala) in a two-step reaction: alanine is first activated by ATP to form Ala-AMP and then transferred to the acceptor end of tRNA(Ala). Also edits incorrectly charged Ser-tRNA(Ala) and Gly-tRNA(Ala) via its editing domain. The sequence is that of Alanine--tRNA ligase from Sodalis glossinidius (strain morsitans).